Here is a 208-residue protein sequence, read N- to C-terminus: Holliday junction branch migration complex subunit RuvA (208 aa).

The segment at 1–63 (MIGMLTGRVE…QDAITLHGFL (63 aa)) is domain I. A domain II region spans residues 64-142 (DRDAKKTFLQ…LSQIEGASAQ (79 aa)). The tract at residues 143–151 (AATSKSPVD) is flexible linker. Residues 151–208 (DTGTEQVVEGLISLGWRQQDAQQAVAEACAENDIPTPLATDDVPRVLRLALALMDRGR) are domain III.

It belongs to the RuvA family. Homotetramer. Forms an RuvA(8)-RuvB(12)-Holliday junction (HJ) complex. HJ DNA is sandwiched between 2 RuvA tetramers; dsDNA enters through RuvA and exits via RuvB. An RuvB hexamer assembles on each DNA strand where it exits the tetramer. Each RuvB hexamer is contacted by two RuvA subunits (via domain III) on 2 adjacent RuvB subunits; this complex drives branch migration. In the full resolvosome a probable DNA-RuvA(4)-RuvB(12)-RuvC(2) complex forms which resolves the HJ.

The protein resides in the cytoplasm. The RuvA-RuvB-RuvC complex processes Holliday junction (HJ) DNA during genetic recombination and DNA repair, while the RuvA-RuvB complex plays an important role in the rescue of blocked DNA replication forks via replication fork reversal (RFR). RuvA specifically binds to HJ cruciform DNA, conferring on it an open structure. The RuvB hexamer acts as an ATP-dependent pump, pulling dsDNA into and through the RuvAB complex. HJ branch migration allows RuvC to scan DNA until it finds its consensus sequence, where it cleaves and resolves the cruciform DNA. This chain is Holliday junction branch migration complex subunit RuvA, found in Bifidobacterium longum (strain DJO10A).